Reading from the N-terminus, the 257-residue chain is Uracil phosphoribosyltransferase homolog (257 aa).

Residues Arg81, Arg90, and 124-127 (EKGN) each bind GTP. 5-phospho-alpha-D-ribose 1-diphosphate is bound at residue Arg134. GTP contacts are provided by Arg151 and Arg180. Residue 186 to 194 (YPILSTGNT) participates in 5-phospho-alpha-D-ribose 1-diphosphate binding. 247 to 249 (THF) lines the uracil pocket.

The protein belongs to the UPRTase family.

The protein localises to the cytoplasm. It localises to the nucleus. This chain is Uracil phosphoribosyltransferase homolog (uprt), found in Danio rerio (Zebrafish).